A 254-amino-acid polypeptide reads, in one-letter code: 3-deoxy-manno-octulosonate cytidylyltransferase (254 aa).

The protein belongs to the KdsB family.

It is found in the cytoplasm. The enzyme catalyses 3-deoxy-alpha-D-manno-oct-2-ulosonate + CTP = CMP-3-deoxy-beta-D-manno-octulosonate + diphosphate. The protein operates within nucleotide-sugar biosynthesis; CMP-3-deoxy-D-manno-octulosonate biosynthesis; CMP-3-deoxy-D-manno-octulosonate from 3-deoxy-D-manno-octulosonate and CTP: step 1/1. It participates in bacterial outer membrane biogenesis; lipopolysaccharide biosynthesis. Functionally, activates KDO (a required 8-carbon sugar) for incorporation into bacterial lipopolysaccharide in Gram-negative bacteria. The polypeptide is 3-deoxy-manno-octulosonate cytidylyltransferase (Tolumonas auensis (strain DSM 9187 / NBRC 110442 / TA 4)).